The chain runs to 156 residues: Rhombotin-1 (156 aa).

LIM zinc-binding domains lie at 24 to 83 (CAGC…RLFG) and 88 to 147 (CAAC…EGQL).

In terms of tissue distribution, expressed mainly in the central nervous. Low level of expression in other tissues including thymus.

It is found in the nucleus. Its function is as follows. May be involved in gene regulation within neural lineage cells potentially by direct DNA binding or by binding to other transcription factors. The polypeptide is Rhombotin-1 (LMO1) (Homo sapiens (Human)).